We begin with the raw amino-acid sequence, 421 residues long: O-glycoside alpha-1,2-mannosyltransferase homolog 5 (421 aa).

E318 (nucleophile) is an active-site residue.

The protein belongs to the glycosyltransferase 15 family.

The protein resides in the cytoplasm. Functionally, probable mannosyltransferase involved in O-glycosylation of cell wall and secreted proteins. The protein is O-glycoside alpha-1,2-mannosyltransferase homolog 5 (omh5) of Schizosaccharomyces pombe (strain 972 / ATCC 24843) (Fission yeast).